Here is a 156-residue protein sequence, read N- to C-terminus: Putative pre-16S rRNA nuclease (156 aa).

It belongs to the YqgF nuclease family.

Its subcellular location is the cytoplasm. Could be a nuclease involved in processing of the 5'-end of pre-16S rRNA. This chain is Putative pre-16S rRNA nuclease, found in Phenylobacterium zucineum (strain HLK1).